The following is a 906-amino-acid chain: Coatomer subunit beta' (906 aa).

WD repeat units lie at residues 13 to 52, 55 to 94, 97 to 136, 140 to 180, 183 to 224, 227 to 266, 350 to 388, and 390 to 425; these read ARSDRVKSVDLHPTEPWMLASLYNGSVCVWNHETQTLVKT, VCDLPVRAAKFVARKNWVVTGADDMQIRVFNYNTLERVHM, AHSDYIRCIAVHPTQPFILTSSDDMLIKLWDWDKKWSCSQ, GHTH…PNFT, GHEK…CVQT, GHAQNVSCASFHPELPIIITGSEDGTVRIWHSSTYRLEST, SCEIYPQTIQHNPNGRFVVVCGDGEYIIYTAMALRNKSF, and SAQEFAWAHDSSEYAIRESNSVVKIFKNFKEKKSFK. Lys-627 is modified (N6-acetyllysine). Residues 746 to 783 form a WD 9 repeat; it reads IRTGRLPEAAFLARTYLPSQVSRVVKLWRENLSKVNQK. Residues 837 to 872 are disordered; that stretch reads EEAKGFQPSRSAAQQELDGKPASPTPVIVTSQTANK. At Ser-859 the chain carries Phosphoserine. Thr-861 carries the post-translational modification Phosphothreonine. Residues 866 to 891 adopt a coiled-coil conformation; that stretch reads TSQTANKEEKSLLELEVDLDNLEIED.

This sequence belongs to the WD repeat COPB2 family. Oligomeric complex that consists of at least the alpha, beta, beta', gamma, delta, epsilon and zeta subunits. Probably interacts with PEX11A. Interacts with SCYL1. Interacts with JAGN1.

Its subcellular location is the cytoplasm. The protein resides in the cytosol. It localises to the golgi apparatus membrane. The protein localises to the cytoplasmic vesicle. It is found in the COPI-coated vesicle membrane. Its function is as follows. The coatomer is a cytosolic protein complex that binds to dilysine motifs and reversibly associates with Golgi non-clathrin-coated vesicles, which further mediate biosynthetic protein transport from the ER, via the Golgi up to the trans Golgi network. Coatomer complex is required for budding from Golgi membranes, and is essential for the retrograde Golgi-to-ER transport of dilysine-tagged proteins. In mammals, the coatomer can only be recruited by membranes associated to ADP-ribosylation factors (ARFs), which are small GTP-binding proteins; the complex also influences the Golgi structural integrity, as well as the processing, activity, and endocytic recycling of LDL receptors. In terms of biological role, this coatomer complex protein, essential for Golgi budding and vesicular trafficking, is a selective binding protein (RACK) for protein kinase C, epsilon type. It binds to Golgi membranes in a GTP-dependent manner. This is Coatomer subunit beta' (COPB2) from Bos taurus (Bovine).